Consider the following 197-residue polypeptide: GTP cyclohydrolase-2 (197 aa).

Arg49–Glu53 provides a ligand contact to GTP. Cys54, Cys65, and Cys67 together coordinate Zn(2+). GTP contacts are provided by residues Gln70, Glu92–Arg94, and Thr114. The Proton acceptor role is filled by Asp126. Catalysis depends on Arg128, which acts as the Nucleophile. Thr149 and Lys154 together coordinate GTP.

This sequence belongs to the GTP cyclohydrolase II family. As to quaternary structure, homodimer. Zn(2+) serves as cofactor.

It carries out the reaction GTP + 4 H2O = 2,5-diamino-6-hydroxy-4-(5-phosphoribosylamino)-pyrimidine + formate + 2 phosphate + 3 H(+). Its pathway is cofactor biosynthesis; riboflavin biosynthesis; 5-amino-6-(D-ribitylamino)uracil from GTP: step 1/4. In terms of biological role, catalyzes the conversion of GTP to 2,5-diamino-6-ribosylamino-4(3H)-pyrimidinone 5'-phosphate (DARP), formate and pyrophosphate. The polypeptide is GTP cyclohydrolase-2 (Cronobacter sakazakii (strain ATCC BAA-894) (Enterobacter sakazakii)).